We begin with the raw amino-acid sequence, 135 residues long: Small ribosomal subunit protein uS11 (135 aa).

It belongs to the universal ribosomal protein uS11 family. Part of the 30S ribosomal subunit. Interacts with proteins S7 and S18. Binds to IF-3.

In terms of biological role, located on the platform of the 30S subunit, it bridges several disparate RNA helices of the 16S rRNA. Forms part of the Shine-Dalgarno cleft in the 70S ribosome. The polypeptide is Small ribosomal subunit protein uS11 (Polynucleobacter asymbioticus (strain DSM 18221 / CIP 109841 / QLW-P1DMWA-1) (Polynucleobacter necessarius subsp. asymbioticus)).